We begin with the raw amino-acid sequence, 226 residues long: uncharacterized protein (226 aa).

The Response regulatory domain occupies 1–112; that stretch reads MLVEDDHSIS…ELTARVKAAI (112 aa). Position 48 is a 4-aspartylphosphate (D48). Residues 126 to 225 constitute a DNA-binding region (ompR/PhoB-type); it reads NKVIRIHQLA…LWGIGYKLGE (100 aa).

Post-translationally, phosphorylated by YcbM.

The protein resides in the cytoplasm. In terms of biological role, member of the two-component regulatory system YcbM/YcbL. This is an uncharacterized protein from Bacillus subtilis (strain 168).